A 98-amino-acid chain; its full sequence is Small ribosomal subunit protein bS20 (98 aa).

Residues M1 to P12 are compositionally biased toward basic residues. The segment at M1–K20 is disordered.

It belongs to the bacterial ribosomal protein bS20 family.

Functionally, binds directly to 16S ribosomal RNA. This is Small ribosomal subunit protein bS20 from Chlamydia caviae (strain ATCC VR-813 / DSM 19441 / 03DC25 / GPIC) (Chlamydophila caviae).